The sequence spans 468 residues: Phosphoglucosamine mutase (468 aa).

Residue Ser112 is the Phosphoserine intermediate of the active site. Residues Ser112, Asp254, Asp256, and Asp258 each contribute to the Mg(2+) site. The residue at position 112 (Ser112) is a Phosphoserine.

The protein belongs to the phosphohexose mutase family. Mg(2+) is required as a cofactor. Post-translationally, activated by phosphorylation.

The enzyme catalyses alpha-D-glucosamine 1-phosphate = D-glucosamine 6-phosphate. Functionally, catalyzes the conversion of glucosamine-6-phosphate to glucosamine-1-phosphate. The polypeptide is Phosphoglucosamine mutase (Prochlorococcus marinus (strain MIT 9303)).